We begin with the raw amino-acid sequence, 212 residues long: uncharacterized protein (212 aa).

One can recognise an NERD domain in the interval 29–146 (KGKAGEKLVK…AAFHPKCSLK (118 aa)).

This is an uncharacterized protein from Bacillus anthracis.